Here is a 38-residue protein sequence, read N- to C-terminus: Antifungal protein 5 (38 aa).

The protein belongs to the plant LTP family.

Its function is as follows. Possesses potent antifungal activity against F.graminearum but not P.infestans. The chain is Antifungal protein 5 from Malva parviflora (Little mallow).